The chain runs to 145 residues: Basic phospholipase A2 PC17 (145 aa).

An N-terminal signal peptide occupies residues 1–21; the sequence is MYPAHLLLLLAVCVSLLGASA. Positions 22–27 are excised as a propeptide; that stretch reads IPPLPL. Cystine bridges form between cysteine 38–cysteine 98, cysteine 54–cysteine 144, cysteine 56–cysteine 72, cysteine 71–cysteine 125, cysteine 78–cysteine 118, cysteine 87–cysteine 111, and cysteine 105–cysteine 116. The Ca(2+) site is built by tyrosine 55, glycine 57, and glycine 59. The active site involves histidine 75. Residue aspartate 76 coordinates Ca(2+). Aspartate 119 is an active-site residue.

Belongs to the phospholipase A2 family. Group I subfamily. D49 sub-subfamily. Requires Ca(2+) as cofactor.

It is found in the secreted. The enzyme catalyses a 1,2-diacyl-sn-glycero-3-phosphocholine + H2O = a 1-acyl-sn-glycero-3-phosphocholine + a fatty acid + H(+). Functionally, PLA2 catalyzes the calcium-dependent hydrolysis of the 2-acyl groups in 3-sn-phosphoglycerides. The chain is Basic phospholipase A2 PC17 from Laticauda laticaudata (Blue-ringed sea krait).